A 121-amino-acid polypeptide reads, in one-letter code: Large ribosomal subunit protein bL19 (121 aa).

Belongs to the bacterial ribosomal protein bL19 family.

Functionally, this protein is located at the 30S-50S ribosomal subunit interface and may play a role in the structure and function of the aminoacyl-tRNA binding site. This is Large ribosomal subunit protein bL19 from Borreliella burgdorferi (strain ZS7) (Borrelia burgdorferi).